Reading from the N-terminus, the 325-residue chain is GTPase Era (325 aa).

Residues 30 to 198 (HCGFVAIVGR…KKHVRDHLPK (169 aa)) form the Era-type G domain. A G1 region spans residues 38–45 (GRPNVGKS). Residue 38–45 (GRPNVGKS) participates in GTP binding. The interval 64-68 (QTTRH) is G2. Residues 85-88 (DTPG) are G3. Residues 85 to 89 (DTPGL) and 147 to 150 (NKVD) each bind GTP. Residues 147-150 (NKVD) are G4. The segment at 177–179 (ISA) is G5. The region spanning 221 to 307 (VREKLMRFTG…YLETWVKVKS (87 aa)) is the KH type-2 domain.

The protein belongs to the TRAFAC class TrmE-Era-EngA-EngB-Septin-like GTPase superfamily. Era GTPase family. Monomer.

The protein localises to the cytoplasm. The protein resides in the cell inner membrane. An essential GTPase that binds both GDP and GTP, with rapid nucleotide exchange. Plays a role in 16S rRNA processing and 30S ribosomal subunit biogenesis and possibly also in cell cycle regulation and energy metabolism. This Vibrio cholerae serotype O1 (strain ATCC 39315 / El Tor Inaba N16961) protein is GTPase Era.